We begin with the raw amino-acid sequence, 307 residues long: Protease HtpX homolog (307 aa).

Helical transmembrane passes span 7 to 27 (AILL…IGGA) and 28 to 48 (SGAT…YWNS). His130 is a Zn(2+) binding site. Glu131 is a catalytic residue. A Zn(2+)-binding site is contributed by His134. 2 helical membrane-spanning segments follow: residues 145–165 (ITAT…FFGG) and 171–191 (GPGI…AMLV). Glu200 lines the Zn(2+) pocket. Positions 277–307 (AGQSGGGLAPGGPPPDPSSPWNKGSRRGPWG) are disordered.

The protein belongs to the peptidase M48B family. Requires Zn(2+) as cofactor.

Its subcellular location is the cell inner membrane. This is Protease HtpX homolog from Nitrobacter winogradskyi (strain ATCC 25391 / DSM 10237 / CIP 104748 / NCIMB 11846 / Nb-255).